The primary structure comprises 509 residues: MEEFQRYIELDRSWQHNFFYPLIFQEYIYGFAYDHGLNKSILLENAGHKKYSLLIVKRLITRMYQQNHLLLSANHSNQNDFFGHKHKNYLYYQIISEGFAVITEIPFSLLLISSLEAKEKKIAKSHNLRSIHSIFPFFEDKFLHLNYVLKILIPYPIHLEILVQTLRYWVKDASSLHLLRFFLYEYRNWNSLITPQKSISIFSKKNQRLFLFLYNFHVCEYESIFVFLCNQSSHLRSTSFGALLERIYFYGKLEYLVKVKTFTKDFRLILWPFKDPFLHYVRYRGKSILASKGTSLLMYKWKYYLINFWQCHFSLWSQPRRIYINRLSKHSLDFMSFFSSVRLNSSVVRSQMVENSFLIDNPIKKFDTIVRIIPLVGSLAKAKFCNVLGHPVSKSVWTDLLDSDIIDRFGRICRNLSHYYSGSSRKKSLYRIKYILRLSCARTLARKHKSTVRAFLKRLGSEFLEEFFTEEEKVLSLILPRNSSISRGLYRGPLWYLDIICIHDLANDE.

Belongs to the intron maturase 2 family. MatK subfamily.

Its subcellular location is the plastid. It localises to the chloroplast. Usually encoded in the trnK tRNA gene intron. Probably assists in splicing its own and other chloroplast group II introns. This chain is Maturase K, found in Austrocylindropuntia vestita (Cactus).